Consider the following 336-residue polypeptide: Dihydroorotate dehydrogenase (quinone) (336 aa).

Residues alanine 62–lysine 66 and threonine 86 each bind FMN. Lysine 66 lines the substrate pocket. Asparagine 111–phenylalanine 115 provides a ligand contact to substrate. Residues asparagine 139 and asparagine 172 each contribute to the FMN site. Asparagine 172 is a substrate binding site. Serine 175 functions as the Nucleophile in the catalytic mechanism. Residue asparagine 177 coordinates substrate. Residues lysine 217 and threonine 245 each coordinate FMN. Asparagine 246–threonine 247 contributes to the substrate binding site. FMN is bound by residues glycine 268, glycine 297, and tyrosine 318 to serine 319.

It belongs to the dihydroorotate dehydrogenase family. Type 2 subfamily. In terms of assembly, monomer. FMN is required as a cofactor.

Its subcellular location is the cell membrane. The enzyme catalyses (S)-dihydroorotate + a quinone = orotate + a quinol. It participates in pyrimidine metabolism; UMP biosynthesis via de novo pathway; orotate from (S)-dihydroorotate (quinone route): step 1/1. Catalyzes the conversion of dihydroorotate to orotate with quinone as electron acceptor. This chain is Dihydroorotate dehydrogenase (quinone), found in Edwardsiella ictaluri (strain 93-146).